A 180-amino-acid polypeptide reads, in one-letter code: Protein SPO16 homolog (180 aa).

Homooligomer. Interacts with SHOC, SYCP1 and SYCE3.

The protein resides in the chromosome. Its function is as follows. Plays a key role in reinforcing the integrity of the central element of the synaptonemal complex (SC) thereby stabilizing SC, ensuring progression of meiotic prophase I in male and female germ cells. Promotes homologous recombination and crossing-over in meiotic prophase I via its association with SHOC1. Required for the localization of TEX11 and MSH4 to recombination intermediates. This Homo sapiens (Human) protein is Protein SPO16 homolog.